Here is a 913-residue protein sequence, read N- to C-terminus: Eukaryotic translation initiation factor 3 subunit C (913 aa).

The disordered stretch occupies residues M1–D44. A compositionally biased stretch (low complexity) spans G8–E21. Phosphoserine occurs at positions 9, 11, 13, 15, 16, 18, and 39. K99 bears the N6-acetyllysine mark. Disordered stretches follow at residues T157–W301 and Q522–E542. Phosphoserine occurs at positions 166, 178, 181, and 182. The segment covering S166 to G190 has biased composition (acidic residues). The segment covering K199–D216 has biased composition (basic and acidic residues). A compositionally biased stretch (acidic residues) spans D217–D232. The span at P261–A278 shows a compositional bias: basic and acidic residues. Residues Q522 to K531 are compositionally biased toward polar residues. T524 carries the post-translational modification Phosphothreonine. K643 is subject to N6-acetyllysine. The PCI domain maps to F673 to P849. The disordered stretch occupies residues F885–Y913. Over residues R886–M899 the composition is skewed to basic and acidic residues. S909 bears the Phosphoserine mark.

Component of the eukaryotic translation initiation factor 3 (eIF-3) complex, which is composed of 13 subunits: EIF3A, EIF3B, EIF3C, EIF3D, EIF3E, EIF3F, EIF3G, EIF3H, EIF3I, EIF3J, EIF3K, EIF3L and EIF3M. The eIF-3 complex appears to include 3 stable modules: module A is composed of EIF3A, EIF3B, EIF3G and EIF3I; module B is composed of EIF3F, EIF3H, and EIF3M; and module C is composed of EIF3C, EIF3D, EIF3E, EIF3K and EIF3L. EIF3C of module C binds EIF3B of module A and EIF3H of module B, thereby linking the three modules. EIF3J is a labile subunit that binds to the eIF-3 complex via EIF3B. The eIF-3 complex interacts with RPS6KB1 under conditions of nutrient depletion. Mitogenic stimulation leads to binding and activation of a complex composed of MTOR and RPTOR, leading to phosphorylation and release of RPS6KB1 and binding of EIF4B to eIF-3. Identified in a HCV IRES-mediated translation complex, at least composed of EIF3C, IGF2BP1, RPS3 and HCV RNA-replicon. Interacts with ALKBH4, IFIT1 and IFIT2. Interacts with BZW2/5MP1. Post-translationally, phosphorylated. Phosphorylation is enhanced upon serum stimulation.

The protein resides in the cytoplasm. In terms of biological role, component of the eukaryotic translation initiation factor 3 (eIF-3) complex, which is required for several steps in the initiation of protein synthesis. The eIF-3 complex associates with the 40S ribosome and facilitates the recruitment of eIF-1, eIF-1A, eIF-2:GTP:methionyl-tRNAi and eIF-5 to form the 43S pre-initiation complex (43S PIC). The eIF-3 complex stimulates mRNA recruitment to the 43S PIC and scanning of the mRNA for AUG recognition. The eIF-3 complex is also required for disassembly and recycling of post-termination ribosomal complexes and subsequently prevents premature joining of the 40S and 60S ribosomal subunits prior to initiation. The eIF-3 complex specifically targets and initiates translation of a subset of mRNAs involved in cell proliferation, including cell cycling, differentiation and apoptosis, and uses different modes of RNA stem-loop binding to exert either translational activation or repression. This chain is Eukaryotic translation initiation factor 3 subunit C, found in Homo sapiens (Human).